A 456-amino-acid polypeptide reads, in one-letter code: Probable glycine dehydrogenase (decarboxylating) subunit 1 (456 aa).

This sequence belongs to the GcvP family. N-terminal subunit subfamily. The glycine cleavage system is composed of four proteins: P, T, L and H. In this organism, the P 'protein' is a heterodimer of two subunits.

It carries out the reaction N(6)-[(R)-lipoyl]-L-lysyl-[glycine-cleavage complex H protein] + glycine + H(+) = N(6)-[(R)-S(8)-aminomethyldihydrolipoyl]-L-lysyl-[glycine-cleavage complex H protein] + CO2. The glycine cleavage system catalyzes the degradation of glycine. The P protein binds the alpha-amino group of glycine through its pyridoxal phosphate cofactor; CO(2) is released and the remaining methylamine moiety is then transferred to the lipoamide cofactor of the H protein. The sequence is that of Probable glycine dehydrogenase (decarboxylating) subunit 1 from Legionella pneumophila subsp. pneumophila (strain Philadelphia 1 / ATCC 33152 / DSM 7513).